The primary structure comprises 413 residues: Low-salt glycan biosynthesis hexosyltransferase Agl6 (413 aa).

Residues 1 to 27 are disordered; it reads MSTRSQSESPVDAPQQGATNGQSASDI. Over residues 16–25 the composition is skewed to polar residues; that stretch reads QGATNGQSAS. The next 4 helical transmembrane spans lie at 270-290, 304-324, 355-375, and 389-409; these read LFSA…VLAW, TGIG…FGAF, IGSV…FTWV, and VVAT…FLLG.

Belongs to the glycosyltransferase 2 family.

It is found in the membrane. Its pathway is protein modification; protein glycosylation. The protein operates within cell surface structure biogenesis; S-layer biogenesis. In terms of biological role, hexosyltransferase involved in N-glycan biosynthetic pathway that takes place under low-salt conditions (1.75 M instead of 3.4 M). Participates in the formation of the tetrasaccharide present at 'Asn-532' of S-layer glycoprotein Csg, consisting of a sulfated hexose, 2 hexoses and rhamnose. Together with Agl5, mediates the addition of sugars 1 and 2 to dolichol phosphate in the tetrasaccharide. The chain is Low-salt glycan biosynthesis hexosyltransferase Agl6 (agl6) from Haloferax volcanii (strain ATCC 29605 / DSM 3757 / JCM 8879 / NBRC 14742 / NCIMB 2012 / VKM B-1768 / DS2) (Halobacterium volcanii).